A 415-amino-acid chain; its full sequence is Phosphoribosylamine--glycine ligase (415 aa).

The 204-residue stretch at 108–311 folds into the ATP-grasp domain; it reads KKIMEKYNIP…LMQHIIDLDE (204 aa). 134 to 191 is an ATP binding site; the sequence is IENCEFPVVVKKDGLAAGKGVIIADTIEAARSAIEIMYGDEEEGTVVFETFLEGEEFS. Glu281 and Asn283 together coordinate Mg(2+).

Belongs to the GARS family. The cofactor is Mg(2+). It depends on Mn(2+) as a cofactor.

It carries out the reaction 5-phospho-beta-D-ribosylamine + glycine + ATP = N(1)-(5-phospho-beta-D-ribosyl)glycinamide + ADP + phosphate + H(+). Its pathway is purine metabolism; IMP biosynthesis via de novo pathway; N(1)-(5-phospho-D-ribosyl)glycinamide from 5-phospho-alpha-D-ribose 1-diphosphate: step 2/2. This Staphylococcus aureus (strain MRSA252) protein is Phosphoribosylamine--glycine ligase.